The following is a 313-amino-acid chain: 4-diphosphocytidyl-2-C-methyl-D-erythritol kinase (313 aa).

Lysine 29 is a catalytic residue. 113 to 123 (PMGGGVGGGSS) is a binding site for ATP. Residue aspartate 155 is part of the active site.

The protein belongs to the GHMP kinase family. IspE subfamily.

The enzyme catalyses 4-CDP-2-C-methyl-D-erythritol + ATP = 4-CDP-2-C-methyl-D-erythritol 2-phosphate + ADP + H(+). It participates in isoprenoid biosynthesis; isopentenyl diphosphate biosynthesis via DXP pathway; isopentenyl diphosphate from 1-deoxy-D-xylulose 5-phosphate: step 3/6. In terms of biological role, catalyzes the phosphorylation of the position 2 hydroxy group of 4-diphosphocytidyl-2C-methyl-D-erythritol. This is 4-diphosphocytidyl-2-C-methyl-D-erythritol kinase from Haemophilus influenzae (strain ATCC 51907 / DSM 11121 / KW20 / Rd).